The following is a 235-amino-acid chain: Ubiquinone biosynthesis O-methyltransferase (235 aa).

Arg36, Gly56, Asp77, and Met122 together coordinate S-adenosyl-L-methionine.

This sequence belongs to the methyltransferase superfamily. UbiG/COQ3 family.

It carries out the reaction a 3-demethylubiquinol + S-adenosyl-L-methionine = a ubiquinol + S-adenosyl-L-homocysteine + H(+). The catalysed reaction is a 3-(all-trans-polyprenyl)benzene-1,2-diol + S-adenosyl-L-methionine = a 2-methoxy-6-(all-trans-polyprenyl)phenol + S-adenosyl-L-homocysteine + H(+). The protein operates within cofactor biosynthesis; ubiquinone biosynthesis. In terms of biological role, O-methyltransferase that catalyzes the 2 O-methylation steps in the ubiquinone biosynthetic pathway. The protein is Ubiquinone biosynthesis O-methyltransferase of Leptothrix cholodnii (strain ATCC 51168 / LMG 8142 / SP-6) (Leptothrix discophora (strain SP-6)).